A 234-amino-acid polypeptide reads, in one-letter code: Glucosamine-6-phosphate deaminase (234 aa).

Asp62 acts as the Proton acceptor; for enolization step in catalysis. Residue Asn128 is the For ring-opening step of the active site. His130 functions as the Proton acceptor; for ring-opening step in the catalytic mechanism. Glu135 acts as the For ring-opening step in catalysis.

It belongs to the glucosamine/galactosamine-6-phosphate isomerase family. NagB subfamily.

It carries out the reaction alpha-D-glucosamine 6-phosphate + H2O = beta-D-fructose 6-phosphate + NH4(+). It functions in the pathway amino-sugar metabolism; N-acetylneuraminate degradation; D-fructose 6-phosphate from N-acetylneuraminate: step 5/5. Its function is as follows. Catalyzes the reversible isomerization-deamination of glucosamine 6-phosphate (GlcN6P) to form fructose 6-phosphate (Fru6P) and ammonium ion. The polypeptide is Glucosamine-6-phosphate deaminase (Ligilactobacillus salivarius (strain UCC118) (Lactobacillus salivarius)).